A 290-amino-acid polypeptide reads, in one-letter code: Oxaloacetate decarboxylase (290 aa).

Substrate is bound at residue Ser-53. Position 91 (Asp-91) interacts with Mg(2+). Substrate-binding residues include Arg-162 and His-238.

This sequence belongs to the isocitrate lyase/PEP mutase superfamily. Oxaloacetate decarboxylase family. As to quaternary structure, homotetramer; dimer of dimers. The cofactor is Mg(2+).

The enzyme catalyses oxaloacetate + H(+) = pyruvate + CO2. Functionally, catalyzes the decarboxylation of oxaloacetate into pyruvate. Seems to play a role in maintaining cellular concentrations of bicarbonate and pyruvate. The sequence is that of Oxaloacetate decarboxylase from Ectopseudomonas mendocina (strain ymp) (Pseudomonas mendocina).